The sequence spans 479 residues: Ribulose bisphosphate carboxylase large chain (479 aa).

A propeptide spanning residues 1–2 is cleaved from the precursor; it reads MS. Residues asparagine 123 and threonine 173 each contribute to the substrate site. Lysine 175 (proton acceptor) is an active-site residue. Lysine 177 lines the substrate pocket. Mg(2+) is bound by residues lysine 201, aspartate 203, and glutamate 204. At lysine 201 the chain carries N6-carboxylysine. Serine 208 carries the phosphoserine modification. Histidine 294 functions as the Proton acceptor in the catalytic mechanism. The substrate site is built by arginine 295 and histidine 327. At threonine 330 the chain carries Phosphothreonine. Substrate is bound at residue serine 379.

Belongs to the RuBisCO large chain family. Type I subfamily. In terms of assembly, heterohexadecamer of 8 large chains and 8 small chains; disulfide-linked. The disulfide link is formed within the large subunit homodimers. Mg(2+) is required as a cofactor. The disulfide bond which can form in the large chain dimeric partners within the hexadecamer appears to be associated with oxidative stress and protein turnover.

The protein localises to the plastid. Its subcellular location is the chloroplast. It carries out the reaction 2 (2R)-3-phosphoglycerate + 2 H(+) = D-ribulose 1,5-bisphosphate + CO2 + H2O. The catalysed reaction is D-ribulose 1,5-bisphosphate + O2 = 2-phosphoglycolate + (2R)-3-phosphoglycerate + 2 H(+). Functionally, ruBisCO catalyzes two reactions: the carboxylation of D-ribulose 1,5-bisphosphate, the primary event in carbon dioxide fixation, as well as the oxidative fragmentation of the pentose substrate in the photorespiration process. Both reactions occur simultaneously and in competition at the same active site. The sequence is that of Ribulose bisphosphate carboxylase large chain from Arabis hirsuta (Hairy rock-cress).